The primary structure comprises 83 residues: Translational regulator CsrA (83 aa).

Belongs to the CsrA/RsmA family. Homodimer; the beta-strands of each monomer intercalate to form a hydrophobic core, while the alpha-helices form wings that extend away from the core.

It localises to the cytoplasm. Functionally, a translational regulator that binds mRNA to regulate translation initiation and/or mRNA stability. Usually binds in the 5'-UTR at or near the Shine-Dalgarno sequence preventing ribosome-binding, thus repressing translation. Its main target seems to be the major flagellin gene, while its function is anatagonized by FliW. The chain is Translational regulator CsrA from Thermotoga petrophila (strain ATCC BAA-488 / DSM 13995 / JCM 10881 / RKU-1).